Reading from the N-terminus, the 365-residue chain is 2-aminoethylphosphonate--pyruvate transaminase (365 aa).

Residue K194 is modified to N6-(pyridoxal phosphate)lysine.

The protein belongs to the class-V pyridoxal-phosphate-dependent aminotransferase family. PhnW subfamily. In terms of assembly, homodimer. Requires pyridoxal 5'-phosphate as cofactor.

The enzyme catalyses (2-aminoethyl)phosphonate + pyruvate = phosphonoacetaldehyde + L-alanine. In terms of biological role, involved in phosphonate degradation. The protein is 2-aminoethylphosphonate--pyruvate transaminase of Bacillus cereus (strain ZK / E33L).